Here is a 273-residue protein sequence, read N- to C-terminus: MWNDARTINLIANTLAVLAVAAMLLAGVAWVAQRPYFTLAAIEIESMPETEMHYVSTGAVRAAIAGRFGGNFFTVDLDEAREAFESVPWVRHATVRRIWPNTLRVRVEEQQPLALWNENQMINTWGEAFTANTGELADDMVLPHFTGPEGTESLVVQRYAELARWFAPLDMHVRELVLNPRYAWAVTLSNGMKLDLGRDPGADAPDPHGLPGALPFAARIQRFVQAWPVVSSRLEGRTVTQADLRYPTGFALALAPLPPEHASHSKSKPAKKR.

Over 1–10 the chain is Cytoplasmic; it reads MWNDARTINL. The helical transmembrane segment at 11-31 threads the bilayer; that stretch reads IANTLAVLAVAAMLLAGVAWV. Over 32–273 the chain is Periplasmic; it reads AQRPYFTLAA…HSKSKPAKKR (242 aa). Residues 37–110 enclose the POTRA domain; the sequence is FTLAAIEIES…NTLRVRVEEQ (74 aa).

The protein belongs to the FtsQ/DivIB family. FtsQ subfamily. As to quaternary structure, part of a complex composed of FtsB, FtsL and FtsQ.

Its subcellular location is the cell inner membrane. In terms of biological role, essential cell division protein. May link together the upstream cell division proteins, which are predominantly cytoplasmic, with the downstream cell division proteins, which are predominantly periplasmic. May control correct divisome assembly. In Bordetella pertussis (strain Tohama I / ATCC BAA-589 / NCTC 13251), this protein is Cell division protein FtsQ.